The primary structure comprises 240 residues: tRNA (guanine-N(1)-)-methyltransferase (240 aa).

S-adenosyl-L-methionine contacts are provided by residues G111 and I130–I135.

The protein belongs to the RNA methyltransferase TrmD family. As to quaternary structure, homodimer.

It is found in the cytoplasm. It carries out the reaction guanosine(37) in tRNA + S-adenosyl-L-methionine = N(1)-methylguanosine(37) in tRNA + S-adenosyl-L-homocysteine + H(+). Functionally, specifically methylates guanosine-37 in various tRNAs. This chain is tRNA (guanine-N(1)-)-methyltransferase, found in Mycoplasma capricolum subsp. capricolum (strain California kid / ATCC 27343 / NCTC 10154).